The primary structure comprises 484 residues: Protein nucleotidyltransferase YdiU (484 aa).

The ATP site is built by Gly-87, Gly-89, Arg-90, Lys-110, Asp-122, Gly-123, Arg-173, and Arg-180. The active-site Proton acceptor is the Asp-249. Mg(2+) is bound by residues Asn-250 and Asp-259. ATP is bound at residue Asp-259.

Belongs to the SELO family. The cofactor is Mg(2+). Mn(2+) is required as a cofactor.

It carries out the reaction L-seryl-[protein] + ATP = 3-O-(5'-adenylyl)-L-seryl-[protein] + diphosphate. The enzyme catalyses L-threonyl-[protein] + ATP = 3-O-(5'-adenylyl)-L-threonyl-[protein] + diphosphate. It catalyses the reaction L-tyrosyl-[protein] + ATP = O-(5'-adenylyl)-L-tyrosyl-[protein] + diphosphate. The catalysed reaction is L-histidyl-[protein] + UTP = N(tele)-(5'-uridylyl)-L-histidyl-[protein] + diphosphate. It carries out the reaction L-seryl-[protein] + UTP = O-(5'-uridylyl)-L-seryl-[protein] + diphosphate. The enzyme catalyses L-tyrosyl-[protein] + UTP = O-(5'-uridylyl)-L-tyrosyl-[protein] + diphosphate. Functionally, nucleotidyltransferase involved in the post-translational modification of proteins. It can catalyze the addition of adenosine monophosphate (AMP) or uridine monophosphate (UMP) to a protein, resulting in modifications known as AMPylation and UMPylation. The sequence is that of Protein nucleotidyltransferase YdiU from Lachnoclostridium phytofermentans (strain ATCC 700394 / DSM 18823 / ISDg) (Clostridium phytofermentans).